Reading from the N-terminus, the 326-residue chain is Myeloid protein 1 (326 aa).

An N-terminal signal peptide occupies residues 1–18 (MPALSLIALLSLVSTAFA). 2 consecutive repeat copies span residues 28 to 162 (QQGR…SDPT) and 177 to 312 (QQDA…SDPT). 3 disulfides stabilise this stretch: Cys37-Cys74, Cys48-Cys53, and Cys113-Cys156. His67, Asp71, and His152 together coordinate Zn(2+). Residues 307–326 (DRSDPTSNLERGKGESEMEV) form a disordered region.

It belongs to the LECT2/MIM-1 family. Substrate for arginine-specific ADP-ribosyltransferase.

It localises to the cytoplasmic granule. In Gallus gallus (Chicken), this protein is Myeloid protein 1 (MIM1).